Here is a 709-residue protein sequence, read N- to C-terminus: DNA ligase (709 aa).

Residues 34–38 (DAEYD), 83–84 (SL), and Glu-115 contribute to the NAD(+) site. Lys-117 acts as the N6-AMP-lysine intermediate in catalysis. The NAD(+) site is built by Arg-138, Glu-185, Lys-301, and Lys-325. Cys-419, Cys-422, Cys-437, and Cys-443 together coordinate Zn(2+). The region spanning 602-691 (RQSDTLAGKT…AEPPPSPPPP (90 aa)) is the BRCT domain. A disordered region spans residues 679–709 (GTTAEPPPSPPPPPPETNTDGNQLLLPLDGE). Residues 683-694 (EPPPSPPPPPPE) show a composition bias toward pro residues.

It belongs to the NAD-dependent DNA ligase family. LigA subfamily. Mg(2+) serves as cofactor. The cofactor is Mn(2+).

The catalysed reaction is NAD(+) + (deoxyribonucleotide)n-3'-hydroxyl + 5'-phospho-(deoxyribonucleotide)m = (deoxyribonucleotide)n+m + AMP + beta-nicotinamide D-nucleotide.. Its function is as follows. DNA ligase that catalyzes the formation of phosphodiester linkages between 5'-phosphoryl and 3'-hydroxyl groups in double-stranded DNA using NAD as a coenzyme and as the energy source for the reaction. It is essential for DNA replication and repair of damaged DNA. In Chloroflexus aurantiacus (strain ATCC 29364 / DSM 637 / Y-400-fl), this protein is DNA ligase.